The chain runs to 129 residues: Ribosome-binding factor A (129 aa).

The protein belongs to the RbfA family. In terms of assembly, monomer. Binds 30S ribosomal subunits, but not 50S ribosomal subunits or 70S ribosomes.

Its subcellular location is the cytoplasm. Its function is as follows. One of several proteins that assist in the late maturation steps of the functional core of the 30S ribosomal subunit. Associates with free 30S ribosomal subunits (but not with 30S subunits that are part of 70S ribosomes or polysomes). Required for efficient processing of 16S rRNA. May interact with the 5'-terminal helix region of 16S rRNA. The sequence is that of Ribosome-binding factor A from Azotobacter vinelandii (strain DJ / ATCC BAA-1303).